The sequence spans 212 residues: Small ribosomal subunit protein eS1 (212 aa).

Belongs to the eukaryotic ribosomal protein eS1 family.

This is Small ribosomal subunit protein eS1 from Ignicoccus hospitalis (strain KIN4/I / DSM 18386 / JCM 14125).